We begin with the raw amino-acid sequence, 190 residues long: CDP-diacylglycerol--glycerol-3-phosphate 3-phosphatidyltransferase (190 aa).

At 6–17 (GVFNIPMYLTLF) the chain is on the cytoplasmic side. A helical transmembrane segment spans residues 18-42 (RIIMVPCFVAVFYWPIYWSPMLCTL). At 43–65 (IFFIAAITDWFDGFLARRWNQTS) the chain is on the periplasmic side. The helical transmembrane segment at 66–86 (RIGGFLDPIADKIMIITALIL) threads the bilayer. Residues 87 to 91 (ISEHF) are Cytoplasmic-facing. Residues 92-112 (HVWWMTLPISSIIIREILISS) form a helical membrane-spanning segment. Residues 113 to 150 (LRECIARVDNKNNISVIWLSKVKTFAQMLALIALLCRL) lie on the Periplasmic side of the membrane. A helical transmembrane segment spans residues 151-173 (NEWTVIMGVISLYTAMLLTLWSM). Residues 174-186 (CYYVYSVSSILLQ) lie on the Cytoplasmic side of the membrane.

It belongs to the CDP-alcohol phosphatidyltransferase class-I family.

The protein localises to the cell inner membrane. The enzyme catalyses a CDP-1,2-diacyl-sn-glycerol + sn-glycerol 3-phosphate = a 1,2-diacyl-sn-glycero-3-phospho-(1'-sn-glycero-3'-phosphate) + CMP + H(+). The protein operates within phospholipid metabolism; phosphatidylglycerol biosynthesis; phosphatidylglycerol from CDP-diacylglycerol: step 1/2. In terms of biological role, catalyzes the conversion of cytidine diphosphate diacylglycerol (CDP-DG) and glycerol 3-phosphate into phosphatidylglycerol. Essential for the synthesis of anionic phospholipids, thereby playing a role in balancing the ratio of zwitterionic and anionic phospholipids, which is thought to be important for normal membrane function. The sequence is that of CDP-diacylglycerol--glycerol-3-phosphate 3-phosphatidyltransferase from Blochmanniella floridana.